We begin with the raw amino-acid sequence, 372 residues long: MAKRDYYEVLGVSKTASEKEIKKAYKRLAMKYHPDRNQGDKEAESQFKEVKEAYEILTDDQKRAAYDQYGHAAFEQGGMGGGGADFSDIFGDVFGDIFGGGRRQQRPSRGADLRYSMELTLEEAVRGVTKEIRIPTLETCDICHGSGAKAGTSPVTCSTCQGAGQVHMRQGFFTVQQPCPHCHGRGQIIKDSCHKCHGHGRVERYKTLSVKIPAGVDTGDRVRLSGEGEAGAKGAPAGDLYVQVQVKSHHIFERQESNLYCEVPVNFAMAALGGEIEVPTLDGRVKLKIPAETQTGKMFRMKGKGVKSVRGGVQGDLLCRVVVETPVKLNERQKELLRELGESFGGAGEETNSPRSKSFFDGVKKFFDDLTK.

Residues D5–G70 form the J domain. The segment at G127–Y205 adopts a CR-type zinc-finger fold. 8 residues coordinate Zn(2+): C140, C143, C157, C160, C179, C182, C193, and C196. CXXCXGXG motif repeat units lie at residues C140–G147, C157–G164, C179–G186, and C193–G200.

Belongs to the DnaJ family. Homodimer. Zn(2+) serves as cofactor.

The protein resides in the cytoplasm. Its function is as follows. Participates actively in the response to hyperosmotic and heat shock by preventing the aggregation of stress-denatured proteins and by disaggregating proteins, also in an autonomous, DnaK-independent fashion. Unfolded proteins bind initially to DnaJ; upon interaction with the DnaJ-bound protein, DnaK hydrolyzes its bound ATP, resulting in the formation of a stable complex. GrpE releases ADP from DnaK; ATP binding to DnaK triggers the release of the substrate protein, thus completing the reaction cycle. Several rounds of ATP-dependent interactions between DnaJ, DnaK and GrpE are required for fully efficient folding. Also involved, together with DnaK and GrpE, in the DNA replication of plasmids through activation of initiation proteins. The sequence is that of Chaperone protein DnaJ from Photorhabdus laumondii subsp. laumondii (strain DSM 15139 / CIP 105565 / TT01) (Photorhabdus luminescens subsp. laumondii).